Consider the following 469-residue polypeptide: Autophagy-related protein 18 (469 aa).

WD repeat units lie at residues Ala-188–Gln-228 and Thr-233–Ser-272. The L/FRRG motif motif lies at Phe-229–Thr-233. The disordered stretch occupies residues Ala-285 to Leu-348. Residues Arg-297–Ser-306 are compositionally biased toward basic and acidic residues. Polar residues-rich tracts occupy residues Tyr-307–Glu-319 and Asn-337–Leu-348.

It belongs to the WD repeat PROPPIN family. As to quaternary structure, component of the PI(3,5)P2 regulatory complex.

The protein localises to the preautophagosomal structure membrane. It is found in the vacuole membrane. The protein resides in the endosome membrane. The PI(3,5)P2 regulatory complex regulates both the synthesis and turnover of phosphatidylinositol 3,5-bisphosphate (PtdIns(3,5)P2). Necessary for proper vacuole morphology. Plays an important role in osmotically-induced vacuole fragmentation. Required for cytoplasm to vacuole transport (Cvt) vesicle formation, pexophagy and starvation-induced autophagy. Involved in correct ATG9 trafficking to the pre-autophagosomal structure. Might also be involved in premeiotic DNA replication. The protein is Autophagy-related protein 18 (ATG18) of Pyricularia oryzae (strain 70-15 / ATCC MYA-4617 / FGSC 8958) (Rice blast fungus).